The primary structure comprises 155 residues: Interleukin-2 (155 aa).

Residues Met-1–Ser-20 form the signal peptide. An O-linked (GalNAc...) threonine glycan is attached at Thr-23. Cys-78 and Cys-126 are joined by a disulfide.

Belongs to the IL-2 family.

It localises to the secreted. Cytokine produced by activated CD4-positive helper T-cells and to a lesser extend activated CD8-positive T-cells and natural killer (NK) cells that plays pivotal roles in the immune response and tolerance. Binds to a receptor complex composed of either the high-affinity trimeric IL-2R (IL2RA/CD25, IL2RB/CD122 and IL2RG/CD132) or the low-affinity dimeric IL-2R (IL2RB and IL2RG). Interaction with the receptor leads to oligomerization and conformation changes in the IL-2R subunits resulting in downstream signaling starting with phosphorylation of JAK1 and JAK3. In turn, JAK1 and JAK3 phosphorylate the receptor to form a docking site leading to the phosphorylation of several substrates including STAT5. This process leads to activation of several pathways including STAT, phosphoinositide-3-kinase/PI3K and mitogen-activated protein kinase/MAPK pathways. Functions as a T-cell growth factor and can increase NK-cell cytolytic activity as well. Promotes strong proliferation of activated B-cells and subsequently immunoglobulin production. Plays a pivotal role in regulating the adaptive immune system by controlling the survival and proliferation of regulatory T-cells, which are required for the maintenance of immune tolerance. Moreover, participates in the differentiation and homeostasis of effector T-cell subsets, including Th1, Th2, Th17 as well as memory CD8-positive T-cells. The chain is Interleukin-2 (Il2) from Rattus norvegicus (Rat).